A 372-amino-acid chain; its full sequence is Flagellar P-ring protein (372 aa).

The signal sequence occupies residues M1–A26.

It belongs to the FlgI family. As to quaternary structure, the basal body constitutes a major portion of the flagellar organelle and consists of four rings (L,P,S, and M) mounted on a central rod.

The protein localises to the periplasm. The protein resides in the bacterial flagellum basal body. In terms of biological role, assembles around the rod to form the L-ring and probably protects the motor/basal body from shearing forces during rotation. The protein is Flagellar P-ring protein of Xanthomonas oryzae pv. oryzae (strain MAFF 311018).